We begin with the raw amino-acid sequence, 558 residues long: Glucose-6-phosphate isomerase (558 aa).

Alanine 2 bears the N-acetylalanine mark. Lysine 12 bears the N6-acetyllysine mark. The residue at position 34 (lysine 34) is an N6-(2-hydroxyisobutyryl)lysine. Residue serine 107 is modified to Phosphoserine. A Phosphothreonine modification is found at threonine 109. Position 142 is an N6-acetyllysine (lysine 142). 159-160 is a D-glucose 6-phosphate binding site; it reads GS. The residue at position 185 (serine 185) is a Phosphoserine; by CK2. 210-215 is a D-glucose 6-phosphate binding site; sequence SKTFTT. Position 250 is a phosphothreonine (threonine 250). D-glucose 6-phosphate contacts are provided by glutamine 354, glutamate 358, and histidine 389. The active-site Proton donor is the glutamate 358. The active site involves histidine 389. Lysine 454 carries the N6-acetyllysine; alternate modification. Residue lysine 454 is modified to N6-malonyllysine; alternate. An N6-succinyllysine; alternate modification is found at lysine 454. Serine 455 carries the post-translational modification Phosphoserine. Residue lysine 519 participates in D-glucose 6-phosphate binding. The active site involves lysine 519.

This sequence belongs to the GPI family. Homodimer; in the catalytically active form. Monomer in the secreted form. Phosphorylation at Ser-185 by CK2 has been shown to decrease enzymatic activity and may contribute to secretion by a non-classical secretory pathway. Post-translationally, ISGylated.

It is found in the cytoplasm. It localises to the secreted. It catalyses the reaction alpha-D-glucose 6-phosphate = beta-D-fructose 6-phosphate. It functions in the pathway carbohydrate degradation; glycolysis; D-glyceraldehyde 3-phosphate and glycerone phosphate from D-glucose: step 2/4. Its function is as follows. In the cytoplasm, catalyzes the conversion of glucose-6-phosphate to fructose-6-phosphate, the second step in glycolysis, and the reverse reaction during gluconeogenesis. Besides it's role as a glycolytic enzyme, also acts as a secreted cytokine: acts as an angiogenic factor (AMF) that stimulates endothelial cell motility. Acts as a neurotrophic factor, neuroleukin, for spinal and sensory neurons. It is secreted by lectin-stimulated T-cells and induces immunoglobulin secretion. The protein is Glucose-6-phosphate isomerase of Pongo abelii (Sumatran orangutan).